Consider the following 73-residue polypeptide: Large ribosomal subunit protein bL31 (73 aa).

This sequence belongs to the bacterial ribosomal protein bL31 family. Type A subfamily. In terms of assembly, part of the 50S ribosomal subunit.

In terms of biological role, binds the 23S rRNA. This Chelativorans sp. (strain BNC1) protein is Large ribosomal subunit protein bL31.